The following is a 682-amino-acid chain: Nephrocystin-1-like protein (682 aa).

The stretch at 10 to 100 (LQDAINRFPQ…ALSPEKEQLS (91 aa)) forms a coiled coil. Positions 96–188 (KEQLSFSVSV…PLESKTLNER (93 aa)) are disordered. Over residues 128 to 148 (NDDESEDSDNDSEIIETDVQL) the composition is skewed to acidic residues. Residues 215 to 275 (VRGNVFVAID…PKTYLQHVKE (61 aa)) enclose the SH3 domain.

The protein belongs to the nephrocystin-1 family. In terms of tissue distribution, expressed in ciliated sensory neurons of the head (amphid neurons) and the tail in hermaphrodites (phasmid neurons) and males (sensory ray neurons).

Functionally, plays a role in the extension of dendrites from phasmid ciliated sensory neurons. May be necessary for initial assembly of the cilium. The protein is Nephrocystin-1-like protein of Caenorhabditis elegans.